The sequence spans 134 residues: Ribulose bisphosphate carboxylase small subunit (134 aa).

Belongs to the RuBisCO small chain family. As to quaternary structure, heterohexadecamer of 8 large and 8 small subunits.

In terms of biological role, ruBisCO catalyzes two reactions: the carboxylation of D-ribulose 1,5-bisphosphate, the primary event in carbon dioxide fixation, as well as the oxidative fragmentation of the pentose substrate. Both reactions occur simultaneously and in competition at the same active site. Although the small subunit is not catalytic it is essential for maximal activity. The chain is Ribulose bisphosphate carboxylase small subunit from Bradyrhizobium diazoefficiens (strain JCM 10833 / BCRC 13528 / IAM 13628 / NBRC 14792 / USDA 110).